A 90-amino-acid chain; its full sequence is UPF0297 protein BH1268 (90 aa).

The protein belongs to the UPF0297 family.

This is UPF0297 protein BH1268 from Halalkalibacterium halodurans (strain ATCC BAA-125 / DSM 18197 / FERM 7344 / JCM 9153 / C-125) (Bacillus halodurans).